Reading from the N-terminus, the 1251-residue chain is Botulinum neurotoxin type E (1251 aa).

His-212 is a Zn(2+) binding site. Residue Glu-213 is part of the active site. Zn(2+)-binding residues include His-216 and Glu-251. Cysteines 412 and 426 form a disulfide. The tract at residues 423–819 (KSICIEINNG…ELNSMVIDTL (397 aa)) is translocation domain (TD). A belt region spans residues 466-515 (NDLDQVILNFNSESAPGLSDEKLNLTIQNDAYIPKYDSNGTSDIEQHDVN). Residues 845–1067 (KRIKSSSVLN…EIQTLYNNEP (223 aa)) are N-terminus of receptor binding domain (N-RBD). Positions 1068–1251 (NANILKDFWG…ISEEHGWQEK (184 aa)) are C-terminus of receptor binding domain (C-RBD). Positions 1221 to 1224 (STWY) match the Host ganglioside-binding motif motif.

The protein belongs to the peptidase M27 family. In terms of assembly, heterodimer; disulfide-linked heterodimer of a light chain (LC) and a heavy chain (HC). The LC has the proteolytic/pharmacological activity, while the N- and C-terminal of the HC mediate channel formation and toxin binding, respectively. Interacts with host synaptic vesicle glycoproteins SV2A and SV2B which probably serve as coreceptors. Requires Zn(2+) as cofactor.

The protein resides in the secreted. It localises to the host cytoplasm. The protein localises to the host cytosol. It is found in the host synapse. Its subcellular location is the host presynaptic cell membrane. The protein resides in the host cytoplasmic vesicle. It localises to the host secretory vesicle. The protein localises to the host synaptic vesicle membrane. It carries out the reaction Limited hydrolysis of proteins of the neuroexocytosis apparatus, synaptobrevins, SNAP25 or syntaxin. No detected action on small molecule substrates.. Its function is as follows. Botulinum toxin causes flaccid paralysis by inhibiting neurotransmitter (acetylcholine) release from the presynaptic membranes of nerve terminals of eukaryotic host skeletal and autonomic nervous system, with frequent heart or respiratory failure. Precursor of botulinum neurotoxin E which has 2 coreceptors; complex polysialylated gangliosides found on neural tissue and specific membrane-anchored proteins found in synaptic vesicles. Receptor proteins are exposed on host presynaptic cell membrane during neurotransmitter release, when the toxin heavy chain (HC) binds to them. Upon synaptic vesicle recycling the toxin is taken up via the endocytic pathway. When the pH of the toxin-containing endosome drops a structural rearrangement occurs so that the N-terminus of the HC forms pores that allows the light chain (LC) to translocate into the cytosol. Once in the cytosol the disulfide bond linking the 2 subunits is reduced and LC cleaves its target protein on synaptic vesicles, preventing their fusion with the cytoplasmic membrane and thus neurotransmitter release. Functionally, has proteolytic activity. After translocation into the eukaryotic host cytosol, LC hydrolyzes the '180-Arg-|-Ile-181' bond in SNAP25, blocking neurotransmitter release. Responsible for host epithelial cell transcytosis, host nerve cell targeting and translocation of light chain (LC) into host cytosol. Composed of 3 subdomains; the translocation domain (TD), and N-terminus and C-terminus of the receptor-binding domain (RBD). The RBD is responsible for the adherence of the toxin to the cell surface. It simultaneously recognizes 2 coreceptors; host polysialated gangliosides and the receptor proteins SV2A and SV2B in close proximity on host synaptic vesicles. Interaction with SV2 proteins requires SV2 glycosylation. The N-terminus of the TD wraps an extended belt around the perimeter of the LC, protecting Zn(2+) in the active site; it may also prevent premature LC dissociation from the translocation channel and protect toxin prior to translocation. The TD inserts into synaptic vesicle membrane to allow translocation into the host cytosol. Binds ganglioside GD1a in vitro. This is Botulinum neurotoxin type E from Clostridium butyricum.